Reading from the N-terminus, the 104-residue chain is MIRKAFVMQVNPDAHEEYQRRHNPIWPELEAVLKDHGAHHYAIYLDKERHLLFATVEIESEARWEAVASTEVCQRWWKYMREVMPSNPDNSPLSAELKEVFYLA.

Residue Y18 participates in substrate binding. H22 functions as the Proton donor in the catalytic mechanism. Substrate contacts are provided by residues Y41 and 76–77; that span reads WW.

Belongs to the rhamnose mutarotase family. Homodimer.

Its subcellular location is the cytoplasm. It catalyses the reaction alpha-L-rhamnose = beta-L-rhamnose. It functions in the pathway carbohydrate metabolism; L-rhamnose metabolism. Functionally, involved in the anomeric conversion of L-rhamnose. The protein is L-rhamnose mutarotase of Klebsiella pneumoniae (strain 342).